Here is a 244-residue protein sequence, read N- to C-terminus: tRNA (guanine-N(1)-)-methyltransferase (244 aa).

S-adenosyl-L-methionine-binding positions include Gly123 and 143–148 (LGDFVM).

The protein belongs to the RNA methyltransferase TrmD family. As to quaternary structure, homodimer.

It localises to the cytoplasm. The enzyme catalyses guanosine(37) in tRNA + S-adenosyl-L-methionine = N(1)-methylguanosine(37) in tRNA + S-adenosyl-L-homocysteine + H(+). Specifically methylates guanosine-37 in various tRNAs. This is tRNA (guanine-N(1)-)-methyltransferase from Ruegeria sp. (strain TM1040) (Silicibacter sp.).